Here is a 216-residue protein sequence, read N- to C-terminus: Thiamine-phosphate synthase (216 aa).

Residues 35–39 (QLRDK) and N67 contribute to the 4-amino-2-methyl-5-(diphosphooxymethyl)pyrimidine site. 2 residues coordinate Mg(2+): D68 and D87. Residue S106 participates in 4-amino-2-methyl-5-(diphosphooxymethyl)pyrimidine binding. A 2-[(2R,5Z)-2-carboxy-4-methylthiazol-5(2H)-ylidene]ethyl phosphate-binding site is contributed by 132–134 (TSS). Residue K135 coordinates 4-amino-2-methyl-5-(diphosphooxymethyl)pyrimidine. Residues G163 and 183 to 184 (IS) contribute to the 2-[(2R,5Z)-2-carboxy-4-methylthiazol-5(2H)-ylidene]ethyl phosphate site.

It belongs to the thiamine-phosphate synthase family. It depends on Mg(2+) as a cofactor.

It catalyses the reaction 2-[(2R,5Z)-2-carboxy-4-methylthiazol-5(2H)-ylidene]ethyl phosphate + 4-amino-2-methyl-5-(diphosphooxymethyl)pyrimidine + 2 H(+) = thiamine phosphate + CO2 + diphosphate. It carries out the reaction 2-(2-carboxy-4-methylthiazol-5-yl)ethyl phosphate + 4-amino-2-methyl-5-(diphosphooxymethyl)pyrimidine + 2 H(+) = thiamine phosphate + CO2 + diphosphate. The catalysed reaction is 4-methyl-5-(2-phosphooxyethyl)-thiazole + 4-amino-2-methyl-5-(diphosphooxymethyl)pyrimidine + H(+) = thiamine phosphate + diphosphate. Its pathway is cofactor biosynthesis; thiamine diphosphate biosynthesis; thiamine phosphate from 4-amino-2-methyl-5-diphosphomethylpyrimidine and 4-methyl-5-(2-phosphoethyl)-thiazole: step 1/1. Functionally, condenses 4-methyl-5-(beta-hydroxyethyl)thiazole monophosphate (THZ-P) and 2-methyl-4-amino-5-hydroxymethyl pyrimidine pyrophosphate (HMP-PP) to form thiamine monophosphate (TMP). In Methanoregula boonei (strain DSM 21154 / JCM 14090 / 6A8), this protein is Thiamine-phosphate synthase.